The sequence spans 79 residues: Acyl carrier protein (79 aa).

One can recognise a Carrier domain in the interval 2 to 77; sequence SDIEARVRKI…SAIDYANTHQ (76 aa). An O-(pantetheine 4'-phosphoryl)serine modification is found at serine 37.

Belongs to the acyl carrier protein (ACP) family. In terms of processing, 4'-phosphopantetheine is transferred from CoA to a specific serine of apo-ACP by AcpS. This modification is essential for activity because fatty acids are bound in thioester linkage to the sulfhydryl of the prosthetic group.

The protein resides in the cytoplasm. The protein operates within lipid metabolism; fatty acid biosynthesis. In terms of biological role, carrier of the growing fatty acid chain in fatty acid biosynthesis. The chain is Acyl carrier protein from Verminephrobacter eiseniae (strain EF01-2).